We begin with the raw amino-acid sequence, 526 residues long: Methyltetrahydroprotoberberine 14-monooxygenase (526 aa).

Residues 14-34 (LLLQYLQPISVALVVIALVWN) traverse the membrane as a helical segment. C468 is a binding site for heme.

It belongs to the cytochrome P450 family. The cofactor is heme. Mainly expressed in roots, and barely in stems, leaves and carpels.

It localises to the membrane. The catalysed reaction is (S)-cis-N-methylcanadine + reduced [NADPH--hemoprotein reductase] + O2 = allocryptopine + oxidized [NADPH--hemoprotein reductase] + H2O + 2 H(+). The enzyme catalyses (S)-cis-N-methylstylopine + reduced [NADPH--hemoprotein reductase] + O2 = protopine + oxidized [NADPH--hemoprotein reductase] + H2O + 2 H(+). It carries out the reaction (S)-cis-N-methyltetrahydrothalifendine + reduced [NADPH--hemoprotein reductase] + O2 = 7-hydroxy-8-methoxy-11-methyl-17,19-dioxa-11-azatetracyclo[12.7.0.0(4,9).0(16,20)]henicosa-1(21),4(9),5,7,14,16(20)-hexaen-2-one + oxidized [NADPH--hemoprotein reductase] + H2O + 2 H(+). It catalyses the reaction (S)-cis-N-methyltetrahydropalmatine + reduced [NADPH--hemoprotein reductase] + O2 = muramine + oxidized [NADPH--hemoprotein reductase] + H2O + 2 H(+). It participates in alkaloid biosynthesis. With respect to regulation, repressed by cytochrome P450 inhibitors ketoconazole, metyrapone, prochloraz, ancymidol and cytochrome C. Its function is as follows. Involved in the biosynthesis of the isoquinoline alkaloid sanguinarine. Catalyzes the conversion of N-methylated protoberberine alkaloids N-methylstylopine and N-methylcanadine into protopine and allocryptopine, respectively. Can also use (S)-cis-N-methyltetrahydrothalifendine and (S)-cis-N-methyltetrahydropalmatine as substrates. The protein is Methyltetrahydroprotoberberine 14-monooxygenase of Papaver somniferum (Opium poppy).